Reading from the N-terminus, the 368-residue chain is Probable staphylococcal-like nuclease CAN2 (368 aa).

Residue Gly2 is the site of N-myristoyl glycine attachment. Residue Cys7 is the site of S-palmitoyl cysteine attachment. The tract at residues 16-56 (DHYPYYKPTSRPHYQPPHYHGQPAAPPAPLQQQHLGPHGVT) is disordered. Low complexity predominate over residues 27 to 38 (PHYQPPHYHGQP). The region spanning 168 to 344 (NTLPVYDKCI…RAANRGLWAS (177 aa)) is the TNase-like domain. Asp181 provides a ligand contact to Ca(2+). Arg251 is a catalytic residue. A Ca(2+)-binding site is contributed by Asp256. Active-site residues include Glu259 and Arg293.

It belongs to the thermonuclease family. The cofactor is Ca(2+).

It is found in the cell membrane. Enzyme that catalyzes the hydrolysis of both DNA and RNA at the 5' position of the phosphodiester bond. In Oryza sativa subsp. japonica (Rice), this protein is Probable staphylococcal-like nuclease CAN2.